Consider the following 274-residue polypeptide: Putative homeobox protein Meis3-like 1 (274 aa).

The MEIS N-terminal domain maps to Gly-12–Lys-65. 2 disordered regions span residues Asp-108–Ile-167 and Asn-228–Glu-248. The segment covering Gly-123–Gln-135 has biased composition (polar residues). The segment at residues Arg-161–Met-223 is a DNA-binding region (homeobox).

It belongs to the TALE/MEIS homeobox family.

Its subcellular location is the nucleus. This chain is Putative homeobox protein Meis3-like 1 (MEIS3P1), found in Homo sapiens (Human).